Here is a 248-residue protein sequence, read N- to C-terminus: Ribonuclease PH (248 aa).

Residues R86 and 124-126 contribute to the phosphate site; that span reads GTR.

Belongs to the RNase PH family. As to quaternary structure, homohexameric ring arranged as a trimer of dimers.

It carries out the reaction tRNA(n+1) + phosphate = tRNA(n) + a ribonucleoside 5'-diphosphate. Phosphorolytic 3'-5' exoribonuclease that plays an important role in tRNA 3'-end maturation. Removes nucleotide residues following the 3'-CCA terminus of tRNAs; can also add nucleotides to the ends of RNA molecules by using nucleoside diphosphates as substrates, but this may not be physiologically important. Probably plays a role in initiation of 16S rRNA degradation (leading to ribosome degradation) during starvation. In Clostridium perfringens (strain SM101 / Type A), this protein is Ribonuclease PH.